The sequence spans 143 residues: Transcriptional regulator MraZ (143 aa).

SpoVT-AbrB domains are found at residues 5-47 (EYQH…PLTE) and 76-119 (AMEG…AKER).

The protein belongs to the MraZ family. Forms oligomers.

The protein resides in the cytoplasm. Its subcellular location is the nucleoid. The sequence is that of Transcriptional regulator MraZ from Lactobacillus delbrueckii subsp. bulgaricus (strain ATCC 11842 / DSM 20081 / BCRC 10696 / JCM 1002 / NBRC 13953 / NCIMB 11778 / NCTC 12712 / WDCM 00102 / Lb 14).